We begin with the raw amino-acid sequence, 475 residues long: Ribulose bisphosphate carboxylase large chain (475 aa).

A propeptide spanning residues 1–2 is cleaved from the precursor; sequence MS. An N-acetylproline modification is found at Pro-3. N6,N6,N6-trimethyllysine is present on Lys-14. Residues Asn-123 and Thr-173 each coordinate substrate. Lys-175 functions as the Proton acceptor in the catalytic mechanism. Residue Lys-177 coordinates substrate. The Mg(2+) site is built by Lys-201, Asp-203, and Glu-204. An N6-carboxylysine modification is found at Lys-201. His-294 functions as the Proton acceptor in the catalytic mechanism. Substrate contacts are provided by Arg-295, His-327, and Ser-379.

The protein belongs to the RuBisCO large chain family. Type I subfamily. Heterohexadecamer of 8 large chains and 8 small chains; disulfide-linked. The disulfide link is formed within the large subunit homodimers. It depends on Mg(2+) as a cofactor. In terms of processing, the disulfide bond which can form in the large chain dimeric partners within the hexadecamer appears to be associated with oxidative stress and protein turnover.

It localises to the plastid. It is found in the chloroplast. It catalyses the reaction 2 (2R)-3-phosphoglycerate + 2 H(+) = D-ribulose 1,5-bisphosphate + CO2 + H2O. The enzyme catalyses D-ribulose 1,5-bisphosphate + O2 = 2-phosphoglycolate + (2R)-3-phosphoglycerate + 2 H(+). In terms of biological role, ruBisCO catalyzes two reactions: the carboxylation of D-ribulose 1,5-bisphosphate, the primary event in carbon dioxide fixation, as well as the oxidative fragmentation of the pentose substrate in the photorespiration process. Both reactions occur simultaneously and in competition at the same active site. This is Ribulose bisphosphate carboxylase large chain from Cerastium glomeratum (Sticky chickweed).